Consider the following 329-residue polypeptide: MELHILEHRLQVASVAKESIPLFTYGLIKLAFLSSKTRCKFFSLTETPEDYTIIVDEEGFLELPSSEHLSVADATWLALNVVSGGGSFSSSQPIGVTKIAKSVIAPLADQNISVFMLSTYQTDFILVRERDLPFVTHTLSSEFTILRVVNGETVAAENLGITNGFVKPKLVQRPVIHPLSSPSNRFCVTSLDPDTLPAVATLLMDVMFYSNGVKDPMATGDDCGHIRFFSFSLIEGYISLVMDVQTQQRFPSNLLFTSASGELWKMVRIGGQPLGFDECGIVAQISEPLAAADIPAYYISTFKFDHALVPEENINGVISALKVSQAEKH.

ACT domains are found at residues 72–140 (ADAT…HTLS) and 262–322 (ELWK…SALK).

Belongs to the GATS family. As to quaternary structure, forms homodimers and heterodimers with CASTOR1. Interacts with the GATOR2 complex which is composed of MIOS, SEC13, SEH1L, WDR24 and WDR59; the interaction is not regulated by arginine. As to expression, widely expressed.

Its subcellular location is the cytoplasm. It is found in the cytosol. In terms of biological role, functions as a negative regulator of the TORC1 signaling pathway through the GATOR complex. As part of homodimers or heterodimers with CASTOR1, directly binds and inhibits the GATOR subcomplex GATOR2 and thereby mTORC1. Does not directly bind arginine, but binding of arginine to CASTOR1 disrupts the interaction of CASTOR2-containing heterodimers with GATOR2 which can in turn activate mTORC1 and the TORC1 signaling pathway. This is Cytosolic arginine sensor for mTORC1 subunit 2 from Homo sapiens (Human).